We begin with the raw amino-acid sequence, 246 residues long: UPF0309 protein TTE0306 (246 aa).

Positions 31–212 (ITESLISEDS…EAEIITNMLE (182 aa)) constitute an SIS domain.

It belongs to the UPF0309 family.

This chain is UPF0309 protein TTE0306, found in Caldanaerobacter subterraneus subsp. tengcongensis (strain DSM 15242 / JCM 11007 / NBRC 100824 / MB4) (Thermoanaerobacter tengcongensis).